The chain runs to 509 residues: Photosystem II CP47 reaction center protein (509 aa).

6 helical membrane passes run Ser21–Ser36, Ile101–Trp115, Gly140–Phe156, Ile203–Asn218, Val237–Val252, and Asn457–Arg472.

This sequence belongs to the PsbB/PsbC family. PsbB subfamily. PSII is composed of 1 copy each of membrane proteins PsbA, PsbB, PsbC, PsbD, PsbE, PsbF, PsbH, PsbI, PsbJ, PsbK, PsbL, PsbM, PsbT, PsbY, PsbZ, Psb30/Ycf12, at least 3 peripheral proteins of the oxygen-evolving complex and a large number of cofactors. It forms dimeric complexes. It depends on Binds multiple chlorophylls. PSII binds additional chlorophylls, carotenoids and specific lipids. as a cofactor.

It is found in the plastid. The protein localises to the chloroplast thylakoid membrane. One of the components of the core complex of photosystem II (PSII). It binds chlorophyll and helps catalyze the primary light-induced photochemical processes of PSII. PSII is a light-driven water:plastoquinone oxidoreductase, using light energy to abstract electrons from H(2)O, generating O(2) and a proton gradient subsequently used for ATP formation. The protein is Photosystem II CP47 reaction center protein of Cyanidium caldarium (Red alga).